We begin with the raw amino-acid sequence, 156 residues long: Large ribosomal subunit protein uL15 (156 aa).

Basic residues predominate over residues 1-16 (MVRRFKRGTKYRRGSR). Residues 1–37 (MVRRFKRGTKYRRGSRTHGWGRVGQHRKSGGSGGKGM) are disordered.

The protein belongs to the universal ribosomal protein uL15 family. In terms of assembly, part of the 50S ribosomal subunit.

Functionally, binds to the 23S rRNA. In Pyrobaculum aerophilum (strain ATCC 51768 / DSM 7523 / JCM 9630 / CIP 104966 / NBRC 100827 / IM2), this protein is Large ribosomal subunit protein uL15.